The chain runs to 1112 residues: Glutamate receptor-interacting protein 1 (1112 aa).

Phosphoserine is present on serine 43. 6 consecutive PDZ domains span residues 53–136 (VVEL…EYEL), 150–238 (TVEV…EYDV), 252–336 (LVEV…LPHH), 471–560 (EVVL…EFDV), 572–657 (HVKL…RKDE), and 672–754 (TVEL…KKQT). 3 disordered regions span residues 752–796 (KQTD…VYPS), 841–886 (KRAS…AEQE), and 922–963 (NHEA…DVGR). Positions 869–880 (STASGFAGASDS) are enriched in low complexity. A compositionally biased stretch (polar residues) spans 928-958 (ARSQLGRQASFQERSNSRPHYSQTTRSNTLP). Positions 988-1070 (KVTLYKDSGM…KLDLVISRNP (83 aa)) constitute a PDZ 7 domain. Residues 1077 to 1112 (IEQPALPSDWSEQNSAFFQQPSHGGNLETREPTNTL) form a disordered region. Over residues 1086-1099 (WSEQNSAFFQQPSH) the composition is skewed to polar residues.

Interacts with EFNB1, EPHA7, EPHB2, EFNB3, KIF5A, KIF5C, KIF5B and the C-terminal tail of PRLHR. Forms a ternary complex with GRIA2 and CSPG4. Can form homomultimers or heteromultimers with GRIP2. Interacts with GRIA2, GRIA3, GRIPAP1/GRASP1, PPFIA1, PPFIA4, FRAS1, PLCD4, PTPRF and liprins-alpha. Interacts with ATAD1 in an ATP-dependent manner. ATAD1-catalyzed ATP hydrolysis disrupts binding to ATAD1 and to GRIA2 and leads to AMPAR complex disassembly. Interacts with SLC30A9. Interacts with BUD23. Forms a complex with NSG1, GRIA2 and STX12; controls the intracellular fate of AMPAR and the endosomal sorting of the GRIA2 subunit toward recycling and membrane targeting. Interacts with NSG1. Expressed in brain, testis and retina. In brain highly expressed in the olfactory bulb, cortex and hippocampus and lower level in thalamus, cerebellum and spinal cord. In brain it is found in the perikaryon, dendrites, dendritic shafts, dendritic spines and, excitatory and inhibitory synapses of neurons. In retina, it is most abundant in the plexiform layers than in perikarya.

The protein localises to the cytoplasmic vesicle. The protein resides in the perikaryon. It is found in the cell projection. Its subcellular location is the dendrite. It localises to the cytoplasm. The protein localises to the endomembrane system. The protein resides in the postsynaptic cell membrane. It is found in the postsynaptic density. Its subcellular location is the endoplasmic reticulum membrane. In terms of biological role, may play a role as a localized scaffold for the assembly of a multiprotein signaling complex and as mediator of the trafficking of its binding partners at specific subcellular location in neurons. Through complex formation with NSG1, GRIA2 and STX12 controls the intracellular fate of AMPAR and the endosomal sorting of the GRIA2 subunit toward recycling and membrane targeting. The polypeptide is Glutamate receptor-interacting protein 1 (Grip1) (Rattus norvegicus (Rat)).